An 822-amino-acid polypeptide reads, in one-letter code: MRLLKFLWWTCVTLICGVLLSFSGAYLYLSPSLPSVEALRNVQLQIPLKVYSEDGKLISEFGEMRRTPIRFADIPQDFIHALLSAEDDNFANHYGVDVKSLMRAAAQLLKSGHIQTGGSTITMQVAKNYFLTNERSFSRKINEILLALQIERQLTKDEILELYVNKIYLGNRAYGIEAAAQVYYGKPIKDLSLAEMAMIAGLPKAPSRYNPLVNPTRSTERRNWILERMLKLGFIDQQRYQAAVEEPINASYHVQTPELNAPYIAEMARAEMVGRYGSEAYTEGYKVITTVRSDLQNAASQSVRDGLIDYDQRHGYRGPETRLPGQTRDAWLKHLGQQRSIGGLEPAIVTQVEKSGIMVMTRDGKEEAVTWDSMKWARPFLSNNSMGPMPRQPADVAQAGDQIRVQRQEDGTLRFVQIPAAQSALISLDPKDGAIRSLVGGFSFEQSNYNRAIQAKRQPGSSFKPFIYSAALDNGFTAASLVNDAPIVFVDEYLDKVWRPKNDTNTFLGPIPLREALYKSRNMVSIRVLQGLGIERAISYITKFGFQRDELPRNFSLALGTATVTPMEIAGAWSVFANGGYKVNPYVIERIESRDGQVLYQANPPRVPVEEQVAADAEDAGNPGDPEHPESAEGEGSIEAQQVAAKAQTTFEPTPAERIIDARTAYIMTSMLQDVIKRGTGRRALALKRTDLAGKTGTTNDSKDGWFSGYNSDYVTSVWVGFDQPETLGRREYGGTVALPIWIRYMGFALKDKPMHTMAEPPGIVSLRIDPVTGRSAAPGTPGAYFEMFKNEDTPPSVNELPPGSFPGSPLPDDEGAPIDLF.

The Cytoplasmic segment spans residues Met-1–Lys-5. Residues Phe-6–Tyr-26 traverse the membrane as a helical; Signal-anchor for type II membrane protein segment. At Leu-27 to Phe-822 the chain is on the periplasmic side. The interval Leu-48–Thr-216 is transglycosylase. Glu-86 acts as the Proton donor; for transglycosylase activity in catalysis. A transpeptidase region spans residues Ile-403 to Arg-744. The active-site Acyl-ester intermediate; for transpeptidase activity is the Ser-461. 2 disordered regions span residues Ala-614–Thr-654 and Lys-790–Phe-822. Positions Pro-812–Phe-822 are enriched in acidic residues.

The protein in the N-terminal section; belongs to the glycosyltransferase 51 family. It in the C-terminal section; belongs to the transpeptidase family.

The protein resides in the cell inner membrane. It carries out the reaction [GlcNAc-(1-&gt;4)-Mur2Ac(oyl-L-Ala-gamma-D-Glu-L-Lys-D-Ala-D-Ala)](n)-di-trans,octa-cis-undecaprenyl diphosphate + beta-D-GlcNAc-(1-&gt;4)-Mur2Ac(oyl-L-Ala-gamma-D-Glu-L-Lys-D-Ala-D-Ala)-di-trans,octa-cis-undecaprenyl diphosphate = [GlcNAc-(1-&gt;4)-Mur2Ac(oyl-L-Ala-gamma-D-Glu-L-Lys-D-Ala-D-Ala)](n+1)-di-trans,octa-cis-undecaprenyl diphosphate + di-trans,octa-cis-undecaprenyl diphosphate + H(+). The enzyme catalyses Preferential cleavage: (Ac)2-L-Lys-D-Ala-|-D-Ala. Also transpeptidation of peptidyl-alanyl moieties that are N-acyl substituents of D-alanine.. It functions in the pathway cell wall biogenesis; peptidoglycan biosynthesis. Its function is as follows. Cell wall formation. Synthesis of cross-linked peptidoglycan from the lipid intermediates. The enzyme has a penicillin-insensitive transglycosylase N-terminal domain (formation of linear glycan strands) and a penicillin-sensitive transpeptidase C-terminal domain (cross-linking of the peptide subunits). The chain is Penicillin-binding protein 1A (mrcA) from Pseudomonas aeruginosa (strain ATCC 15692 / DSM 22644 / CIP 104116 / JCM 14847 / LMG 12228 / 1C / PRS 101 / PAO1).